A 676-amino-acid polypeptide reads, in one-letter code: DNA ligase (676 aa).

NAD(+)-binding positions include 34–38 (DAEYD), 84–85 (SL), and Glu-116. Catalysis depends on Lys-118, which acts as the N6-AMP-lysine intermediate. Arg-139, Glu-174, Lys-294, and Lys-318 together coordinate NAD(+). 4 residues coordinate Zn(2+): Cys-412, Cys-415, Cys-428, and Cys-433. The 88-residue stretch at 589–676 (KGGEALKGLT…RTGKKAEELV (88 aa)) folds into the BRCT domain.

Belongs to the NAD-dependent DNA ligase family. LigA subfamily. Requires Mg(2+) as cofactor. Mn(2+) is required as a cofactor.

It catalyses the reaction NAD(+) + (deoxyribonucleotide)n-3'-hydroxyl + 5'-phospho-(deoxyribonucleotide)m = (deoxyribonucleotide)n+m + AMP + beta-nicotinamide D-nucleotide.. DNA ligase that catalyzes the formation of phosphodiester linkages between 5'-phosphoryl and 3'-hydroxyl groups in double-stranded DNA using NAD as a coenzyme and as the energy source for the reaction. It is essential for DNA replication and repair of damaged DNA. This chain is DNA ligase, found in Thermus thermophilus (strain ATCC BAA-163 / DSM 7039 / HB27).